Consider the following 765-residue polypeptide: Beta-glucosidase cel3A (765 aa).

The first 24 residues, 1 to 24, serve as a signal peptide directing secretion; it reads MRWSSPTSSSLSLVALLLVAHVDA. N-linked (GlcNAc...) asparagine glycans are attached at residues Asn-66, Asn-124, Asn-250, Asn-304, Asn-311, Asn-349, Asn-549, Asn-588, Asn-657, and Asn-681.

Belongs to the glycosyl hydrolase 3 family.

It localises to the secreted. The enzyme catalyses Hydrolysis of terminal, non-reducing beta-D-glucosyl residues with release of beta-D-glucose.. It functions in the pathway glycan metabolism; cellulose degradation. In terms of biological role, beta-glucosidases are one of a number of cellulolytic enzymes involved in the degradation of cellulosic biomass. Catalyzes the last step releasing glucose from the inhibitory cellobiose. Shows higher activities on cellobiose and cellotriose but lower activities on laminarioligosaccharides and polymers. This chain is Beta-glucosidase cel3A, found in Pyricularia oryzae (strain 70-15 / ATCC MYA-4617 / FGSC 8958) (Rice blast fungus).